A 554-amino-acid polypeptide reads, in one-letter code: 3-(3-hydroxy-phenyl)propionate/3-hydroxycinnamic acid hydroxylase (554 aa).

FAD contacts are provided by residues 17-46 and 285-295; these read QVAI…VVEK and FRIDRVLLAGD.

The protein belongs to the PheA/TfdB FAD monooxygenase family. Requires FAD as cofactor.

It catalyses the reaction 3-(3-hydroxyphenyl)propanoate + NADH + O2 + H(+) = 3-(2,3-dihydroxyphenyl)propanoate + NAD(+) + H2O. The catalysed reaction is (2E)-3-(3-hydroxyphenyl)prop-2-enoate + NADH + O2 + H(+) = (2E)-3-(2,3-dihydroxyphenyl)prop-2-enoate + NAD(+) + H2O. Its pathway is aromatic compound metabolism; 3-phenylpropanoate degradation. Catalyzes the insertion of one atom of molecular oxygen into position 2 of the phenyl ring of 3-(3-hydroxyphenyl)propionate (3-HPP) and hydroxycinnamic acid (3HCI). The polypeptide is 3-(3-hydroxy-phenyl)propionate/3-hydroxycinnamic acid hydroxylase (Escherichia coli O157:H7).